We begin with the raw amino-acid sequence, 173 residues long: dCTP deaminase, dUMP-forming (173 aa).

Residues 93-98 (RSSIGR), Asp-111, 119-121 (TLE), Gln-138, and Tyr-151 contribute to the dCTP site. Glu-121 functions as the Proton donor/acceptor in the catalytic mechanism.

This sequence belongs to the dCTP deaminase family. In terms of assembly, homotrimer.

The catalysed reaction is dCTP + 2 H2O = dUMP + NH4(+) + diphosphate. It functions in the pathway pyrimidine metabolism; dUMP biosynthesis; dUMP from dCTP: step 1/1. In terms of biological role, bifunctional enzyme that catalyzes both the deamination of dCTP to dUTP and the hydrolysis of dUTP to dUMP without releasing the toxic dUTP intermediate. This is dCTP deaminase, dUMP-forming from Clostridium acetobutylicum (strain ATCC 824 / DSM 792 / JCM 1419 / IAM 19013 / LMG 5710 / NBRC 13948 / NRRL B-527 / VKM B-1787 / 2291 / W).